A 305-amino-acid polypeptide reads, in one-letter code: Fe-S cluster assembly protein dre2 (305 aa).

Residues 21–150 form an N-terminal SAM-like domain region; the sequence is DATQKRTLLL…EKPQYQEAAV (130 aa). Residues 151-195 are linker; it reads PLRFGLKKKNKVAPEPVKVESVGFVDNYDDDELIDEDDLLAEEDL. The [2Fe-2S] cluster site is built by cysteine 205, cysteine 217, cysteine 220, and cysteine 222. The fe-S binding site A stretch occupies residues 205 to 222; the sequence is CKPDIAKKRRRACKDCTC. Cysteine 268, cysteine 271, cysteine 279, and cysteine 282 together coordinate [4Fe-4S] cluster. Short sequence motifs (cx2C motif) lie at residues 268–271 and 279–282; these read CNSC and CEGC. The tract at residues 268-282 is fe-S binding site B; the sequence is CNSCSLGDAFRCEGC.

It belongs to the anamorsin family. In terms of assembly, monomer. Interacts with tah18. Interacts with mia40. The cofactor is [2Fe-2S] cluster. Requires [4Fe-4S] cluster as cofactor.

It is found in the cytoplasm. Its subcellular location is the mitochondrion intermembrane space. Functionally, component of the cytosolic iron-sulfur (Fe-S) protein assembly (CIA) machinery required for the maturation of extramitochondrial Fe-S proteins. Part of an electron transfer chain functioning in an early step of cytosolic Fe-S biogenesis, facilitating the de novo assembly of a [4Fe-4S] cluster on the scaffold complex cfd1-nbp35. Electrons are transferred to dre2 from NADPH via the FAD- and FMN-containing protein tah18. Tah18-dre2 are also required for the assembly of the diferric tyrosyl radical cofactor of ribonucleotide reductase (RNR), probably by providing electrons for reduction during radical cofactor maturation in the catalytic small subunit rnr2. This chain is Fe-S cluster assembly protein dre2, found in Talaromyces marneffei (strain ATCC 18224 / CBS 334.59 / QM 7333) (Penicillium marneffei).